The chain runs to 391 residues: Phosphoglycerate kinase (391 aa).

Residues 21–23 (DLN), Arg-36, 59–62 (HRGR), Arg-113, and Arg-146 each bind substrate. ATP-binding positions include Lys-197, Glu-314, and 340-343 (GGDT).

It belongs to the phosphoglycerate kinase family. Monomer.

The protein resides in the cytoplasm. The enzyme catalyses (2R)-3-phosphoglycerate + ATP = (2R)-3-phospho-glyceroyl phosphate + ADP. The protein operates within carbohydrate degradation; glycolysis; pyruvate from D-glyceraldehyde 3-phosphate: step 2/5. The polypeptide is Phosphoglycerate kinase (Ruthia magnifica subsp. Calyptogena magnifica).